Here is a 531-residue protein sequence, read N- to C-terminus: Sterol 26-hydroxylase, mitochondrial (531 aa).

A mitochondrion-targeting transit peptide spans 1–33 (MAALGCARLRWALRGAGRGLCPHGARAKAAIPA). The residue at position 283 (K283) is an N6-acetyllysine. Positions 384–398 (PLLKAVLKETLRLYP) are sterol-binding. A heme-binding site is contributed by C476. An N6-acetyllysine mark is found at K509 and K520.

Belongs to the cytochrome P450 family. Interacts with HSP70; this interaction is required for initial targeting to mitochondria. Heme serves as cofactor. As to expression, expressed in the neural retina and underlying retinal pigment epithelium (at protein level). Expressed in the gray and white matter of cerebellum (at protein level).

It localises to the mitochondrion inner membrane. It catalyses the reaction 5beta-cholestane-3alpha,7alpha,12alpha-triol + 6 reduced [adrenodoxin] + 3 O2 + 5 H(+) = (25R)-3alpha,7alpha,12alpha-trihydroxy-5beta-cholestan-26-oate + 6 oxidized [adrenodoxin] + 4 H2O. It carries out the reaction cholestanol + 2 reduced [adrenodoxin] + O2 + 2 H(+) = (25R)-26-hydroxycholestanol + 2 oxidized [adrenodoxin] + H2O. The enzyme catalyses (25R)-3beta-hydroxycholest-5-en-7-one-26-al + 2 reduced [adrenodoxin] + O2 + H(+) = (25R)-3beta-hydroxycholest-5-en-7-one-26-oate + 2 oxidized [adrenodoxin] + H2O. The catalysed reaction is (25R)-3beta,26-dihydroxycholest-5-en-7-one + 2 reduced [adrenodoxin] + O2 + 2 H(+) = (25R)-3beta-hydroxycholest-5-en-7-one-26-al + 2 oxidized [adrenodoxin] + 2 H2O. It catalyses the reaction 7-oxocholesterol + 2 reduced [adrenodoxin] + O2 + 2 H(+) = (25R)-3beta,26-dihydroxycholest-5-en-7-one + 2 oxidized [adrenodoxin] + H2O. It carries out the reaction calciol + 2 reduced [adrenodoxin] + O2 + 2 H(+) = calcidiol + 2 oxidized [adrenodoxin] + H2O. The enzyme catalyses (25R)-5beta-cholestane-3alpha,7alpha,12alpha,26-tetrol + 2 reduced [adrenodoxin] + O2 + 2 H(+) = (25R)-3alpha,7alpha,12alpha-trihydroxy-5beta-cholestan-26-al + 2 oxidized [adrenodoxin] + 2 H2O. The catalysed reaction is 2 reduced [adrenodoxin] + cholesterol + O2 + 2 H(+) = (25R)-cholest-5-ene-3beta,26-diol + 2 oxidized [adrenodoxin] + H2O. It catalyses the reaction (25R)-3beta,4beta-dihydroxycholest-5-en-26-al + 2 reduced [adrenodoxin] + O2 + H(+) = (25R)-3beta,4beta-dihydroxycholest-5-en-26-oate + 2 oxidized [adrenodoxin] + H2O. It carries out the reaction (25R)-4beta,26-dihydroxycholesterol + 2 reduced [adrenodoxin] + O2 + 2 H(+) = (25R)-3beta,4beta-dihydroxycholest-5-en-26-al + 2 oxidized [adrenodoxin] + 2 H2O. The enzyme catalyses 4beta-hydroxycholesterol + 2 reduced [adrenodoxin] + O2 + 2 H(+) = (25R)-4beta,26-dihydroxycholesterol + 2 oxidized [adrenodoxin] + H2O. The catalysed reaction is (25R)-3beta-hydroxy-5-cholesten-26-al + 2 reduced [adrenodoxin] + O2 + H(+) = (25R)-3beta-hydroxy-5-cholestenoate + 2 oxidized [adrenodoxin] + H2O. It catalyses the reaction (25R)-cholest-5-ene-3beta,26-diol + 2 reduced [adrenodoxin] + O2 + 2 H(+) = (25R)-3beta-hydroxy-5-cholesten-26-al + 2 oxidized [adrenodoxin] + 2 H2O. It carries out the reaction (25R)-3alpha,7alpha,12alpha-trihydroxy-5beta-cholestan-26-al + 2 reduced [adrenodoxin] + O2 + H(+) = (25R)-3alpha,7alpha,12alpha-trihydroxy-5beta-cholestan-26-oate + 2 oxidized [adrenodoxin] + H2O. The enzyme catalyses 5beta-cholestane-3alpha,7alpha,12alpha-triol + 2 reduced [adrenodoxin] + O2 + 2 H(+) = (25R)-5beta-cholestane-3alpha,7alpha,12alpha,26-tetrol + 2 oxidized [adrenodoxin] + H2O. Its pathway is hormone biosynthesis; cholecalciferol biosynthesis. It participates in steroid metabolism; cholesterol degradation. The protein operates within lipid metabolism; bile acid biosynthesis. Its function is as follows. Cytochrome P450 monooxygenase that catalyzes regio- and stereospecific hydroxylation of cholesterol and its derivatives. Hydroxylates (with R stereochemistry) the terminal methyl group of cholesterol side-chain in a three step reaction to yield at first a C26 alcohol, then a C26 aldehyde and finally a C26 acid. Regulates cholesterol homeostasis by catalyzing the conversion of excess cholesterol to bile acids via both the 'neutral' (classic) and the 'acid' (alternative) pathways. May also regulate cholesterol homeostasis via generation of active oxysterols, which act as ligands for NR1H2 and NR1H3 nuclear receptors, modulating the transcription of genes involved in lipid metabolism. Plays a role in cholestanol metabolism in the cerebellum. Similarly to cholesterol, hydroxylates cholestanol and may facilitate sterol diffusion through the blood-brain barrier to the systemic circulation for further degradation. Also hydroxylates retinal 7-ketocholesterol, a noxious oxysterol with pro-inflammatory and pro-apoptotic effects, and may play a role in its elimination from the retinal pigment epithelium. May play a redundant role in vitamin D biosynthesis. Catalyzes 25-hydroxylation of vitamin D3 that is required for its conversion to a functionally active form. This Homo sapiens (Human) protein is Sterol 26-hydroxylase, mitochondrial.